Reading from the N-terminus, the 410-residue chain is MIQKPRGTRDFLPDEMEARRSIEAKMREAVRRFGYREVCTPEFEELELFTLRSGEGIMQEMYVFEDKGGRKLALRPEITAAVIRMYINEAKVAPKPLRWCYFADCFRYERPQKGRYRQFWQFGAELIGADTALADAEVIMLAAEALNATGVTWELKVGHLAFMKNLLADLDPAAQRRVMAHLDKKDFEGLAETLAGMRKSGLNDSLTALVECRTLAEAFEIAGTIPEKERVEQTMGILDASGVRYSLNFGIARGLDYYTGMVFEGFAENLGAENQILGGGAYRLAHLFGGDDVASCGFAIGFDRVMVSLGEVFAAKDTIAGIVCTDEGRSFALSVAREFRAAGIRAEMDLMGRGLGAQLAHASKTADFAVVIGKREADAGQVTLKNLHSGEQKTLDPAAAIAEVKAHGAR.

This sequence belongs to the class-II aminoacyl-tRNA synthetase family.

The protein localises to the cytoplasm. The enzyme catalyses tRNA(His) + L-histidine + ATP = L-histidyl-tRNA(His) + AMP + diphosphate + H(+). The protein is Histidine--tRNA ligase of Methanoregula boonei (strain DSM 21154 / JCM 14090 / 6A8).